We begin with the raw amino-acid sequence, 467 residues long: MNDFERFGRNVVRTFYDPPPCNESNEPIWLLGQRYDSRPPLPKPAPSDSSTTATATAQAERNEDESWIRTSIDDKERKEAPNGEDPTQYGNWPSAFLDDFESRVWMTYRSGFSPIQKSQDPKATSAMSFRVRMQNLASPGFTSDAGFGCMIRSGQCILANALQILRLGRDWRWQENHADKDHAEILSLFADDPQAPFSIHRFVEHGAAVCGKYPGEWFGPSAAARCIQDLANKHREAGLKVYVSGDGADVYEDKLKQVAVDEDGLWQPTLILVGTRLGIDKITPVYWEALKASLQIPQSIGIAGGRPSASHYFVGVQGNNFYYLDPHSTRPLLPFHPPSLAAATSDTPNLTASTTSVSSTTSSTTIVPPADSIPAPSDPRQSLYPPSDLSTCHTRRIRRLQIREMDPSMLLAFLVTSEADYQDWKEGVQGVQGKSVVHVQDKEPPPRGQEREGAIDEVESWDEDGLQ.

Residues 32 to 93 (GQRYDSRPPL…EDPTQYGNWP (62 aa)) form a disordered region. Over residues 60 to 81 (ERNEDESWIRTSIDDKERKEAP) the composition is skewed to basic and acidic residues. C149 serves as the catalytic Nucleophile. Active-site residues include D325 and H327. Over residues 343-352 (ATSDTPNLTA) the composition is skewed to polar residues. 2 disordered regions span residues 343–390 (ATSD…SDLS) and 429–467 (QGVQGKSVVHVQDKEPPPRGQEREGAIDEVESWDEDGLQ). Positions 353–379 (STTSVSSTTSSTTIVPPADSIPAPSDP) are enriched in low complexity. Positions 439–454 (VQDKEPPPRGQEREGA) are enriched in basic and acidic residues. A compositionally biased stretch (acidic residues) spans 455–467 (IDEVESWDEDGLQ).

The protein belongs to the peptidase C54 family.

The protein resides in the cytoplasm. It is found in the nucleus. It localises to the preautophagosomal structure. The catalysed reaction is [protein]-C-terminal L-amino acid-glycyl-phosphatidylethanolamide + H2O = [protein]-C-terminal L-amino acid-glycine + a 1,2-diacyl-sn-glycero-3-phosphoethanolamine. Cysteine protease that plays a key role in cytoplasm to vacuole transport (Cvt) and autophagy by mediating both proteolytic activation and delipidation of ATG8. Required for selective autophagic degradation of the nucleus (nucleophagy) as well as for mitophagy which contributes to regulate mitochondrial quantity and quality by eliminating the mitochondria to a basal level to fulfill cellular energy requirements and preventing excess ROS production. The protease activity is required for proteolytic activation of ATG8: cleaves the C-terminal amino acid of ATG8 to reveal a C-terminal glycine. ATG8 ubiquitin-like activity requires the exposure of the glycine at the C-terminus for its conjugation to phosphatidylethanolamine (PE) and its insertion to membranes, which is necessary for autophagy. The ATG8-PE conjugate mediates tethering between adjacent membranes and stimulates membrane hemifusion, leading to expansion of the autophagosomal membrane during autophagy. In addition to the protease activity, also catalyzes deconjugation of PE-conjugated forms of ATG8 during macroautophagy: ATG8 delipidation is required to release the protein from membranes, which facilitates multiple events during macroautophagy, and especially for efficient autophagosome biogenesis, the assembly of ATG9-containing tubulovesicular clusters into phagophores/autophagosomes, and for the disassembly of PAS-associated ATG components. ATG8 delipidation by ATG4 also recycles ATG8-PE generated on inappropriate membranes to maintain a reservoir of unlipidated ATG8 that is required for autophagosome formation at the PAS. This is Probable cysteine protease ATG4 (ATG4) from Phaeosphaeria nodorum (strain SN15 / ATCC MYA-4574 / FGSC 10173) (Glume blotch fungus).